The following is a 250-amino-acid chain: Snake venom serine protease pictobin (250 aa).

The N-terminal stretch at 1-11 (ANLLILQVSYA) is a signal peptide. A propeptide spanning residues 12 to 17 (QKSSEL) is cleaved from the precursor. The Peptidase S1 domain maps to 18 to 241 (VIGGDECNIN…HLHWILSIIA (224 aa)). 5 disulfides stabilise this stretch: cysteine 24-cysteine 155, cysteine 42-cysteine 58, cysteine 134-cysteine 202, cysteine 166-cysteine 181, and cysteine 192-cysteine 217. Histidine 57 serves as the catalytic Charge relay system. N-linked (GlcNAc...) asparagine glycosylation is found at asparagine 71 and asparagine 95. Aspartate 102 acts as the Charge relay system in catalysis. N-linked (GlcNAc...) asparagine glycosylation is found at asparagine 146 and asparagine 162. Serine 196 acts as the Charge relay system in catalysis. An N-linked (GlcNAc...) asparagine glycan is attached at asparagine 243.

It belongs to the peptidase S1 family. Snake venom subfamily. In terms of assembly, monomer. As to expression, expressed by the venom gland.

The protein resides in the secreted. Its function is as follows. Snake venom serine protease that may impair the hemostatic system of the prey. This is Snake venom serine protease pictobin from Bothrops pictus (Desert lancehead).